Reading from the N-terminus, the 82-residue chain is NAD(P)H-quinone oxidoreductase subunit O (82 aa).

The protein belongs to the complex I NdhO subunit family. NDH-1 can be composed of about 15 different subunits; different subcomplexes with different compositions have been identified which probably have different functions.

The protein resides in the cellular thylakoid membrane. It carries out the reaction a plastoquinone + NADH + (n+1) H(+)(in) = a plastoquinol + NAD(+) + n H(+)(out). The enzyme catalyses a plastoquinone + NADPH + (n+1) H(+)(in) = a plastoquinol + NADP(+) + n H(+)(out). Functionally, NDH-1 shuttles electrons from an unknown electron donor, via FMN and iron-sulfur (Fe-S) centers, to quinones in the respiratory and/or the photosynthetic chain. The immediate electron acceptor for the enzyme in this species is believed to be plastoquinone. Couples the redox reaction to proton translocation, and thus conserves the redox energy in a proton gradient. Cyanobacterial NDH-1 also plays a role in inorganic carbon-concentration. The sequence is that of NAD(P)H-quinone oxidoreductase subunit O from Prochlorococcus marinus (strain MIT 9211).